The primary structure comprises 344 residues: Deoxyhypusine hydroxylase (344 aa).

HEAT-like PBS-type repeat units follow at residues 81–107 and 115–140; these read LKHE…VLED and RHEA…FRDR. Fe cation-binding residues include His-83, Glu-84, His-116, and Glu-117. Residues 169–188 are disordered; sequence EKLRASDFSSVDPAPPTAQG. HEAT-like PBS-type repeat units lie at residues 210 to 240, 248 to 274, and 281 to 308; these read KRYR…LAKG, FRHE…ALSN, and VRHE…FLHD. Fe cation contacts are provided by His-250, Glu-251, His-283, and Glu-284.

Belongs to the deoxyhypusine hydroxylase family. Requires Fe(2+) as cofactor.

The protein resides in the cytoplasm. Its subcellular location is the nucleus. The catalysed reaction is [eIF5A protein]-deoxyhypusine + AH2 + O2 = [eIF5A protein]-hypusine + A + H2O. Its pathway is protein modification; eIF5A hypusination. Its function is as follows. Catalyzes the hydroxylation of the N(6)-(4-aminobutyl)-L-lysine intermediate to form hypusine, an essential post-translational modification only found in mature eIF-5A factor. This is Deoxyhypusine hydroxylase from Chaetomium globosum (strain ATCC 6205 / CBS 148.51 / DSM 1962 / NBRC 6347 / NRRL 1970) (Soil fungus).